The chain runs to 403 residues: MSEKGRLFTSESVTEGHPDKICDAISDSVLDALLAADPRSRVAVETLVTTGQVHVVGEVTTSAKEAFADITNTVRARILEIGYDSSDKGFDGATCGVNIGIGAQSPDIAQGVDTAHEARVEGAADPLDSQGAGDQGLMFGYAINATPELMPLPIALAHRLSRRLTEVRKNGVLPYLRPDGKTQVTIAYEDNVPVRLDTVVISTQHAADIDLEKTLDPDIREKVLNTVLDDLAHETLDASTVRVLVNPTGKFVLGGPMGDAGLTGRKIIVDTYGGWARHGGGAFSGKDPSKVDRSAAYAMRWVAKNVVAAGLAERVEVQVAYAIGKAAPVGLFVETFGTETEDPVKIEKAIGEVFDLRPGAIIRDLNLLRPIYAPTAAYGHFGRTDVELPWEQLDKVDDLKRAI.

His17 lines the ATP pocket. Mg(2+) is bound at residue Asp19. Glu45 serves as a coordination point for K(+). Residues Glu58 and Gln104 each coordinate L-methionine. Residues 104-114 are flexible loop; it reads QSPDIAQGVDT. ATP-binding positions include 179–181, 250–251, Asp259, 265–266, Ala282, and Lys286; these read DGK, KF, and RK. Asp259 provides a ligand contact to L-methionine. Lys290 is a binding site for L-methionine.

This sequence belongs to the AdoMet synthase family. Homotetramer; dimer of dimers. It depends on Mg(2+) as a cofactor. Requires K(+) as cofactor.

Its subcellular location is the cytoplasm. The catalysed reaction is L-methionine + ATP + H2O = S-adenosyl-L-methionine + phosphate + diphosphate. It functions in the pathway amino-acid biosynthesis; S-adenosyl-L-methionine biosynthesis; S-adenosyl-L-methionine from L-methionine: step 1/1. Functionally, catalyzes the formation of S-adenosylmethionine (AdoMet) from methionine and ATP. The overall synthetic reaction is composed of two sequential steps, AdoMet formation and the subsequent tripolyphosphate hydrolysis which occurs prior to release of AdoMet from the enzyme. The protein is S-adenosylmethionine synthase of Mycobacterium tuberculosis (strain ATCC 25177 / H37Ra).